Consider the following 485-residue polypeptide: Noelin (485 aa).

A signal peptide spans 1–16; that stretch reads MSVPLLKIGVVLSTMA. 8 N-linked (GlcNAc...) asparagine glycosylation sites follow: asparagine 33, asparagine 103, asparagine 187, asparagine 288, asparagine 307, asparagine 394, asparagine 431, and asparagine 473. A coiled-coil region spans residues 87–225; that stretch reads RDARTKQLRQ…ERLRACMQKL (139 aa). One can recognise an Olfactomedin-like domain in the interval 226-478; it reads ACGKLTGISD…QILYNVTLFH (253 aa). Cysteine 227 and cysteine 409 form a disulfide bridge.

As to quaternary structure, homotetramer; disulfide-linked. Dimer of dimers, giving rise to a V-shaped homotretramer. Isoform 1 and isoform 3 interact with RTN4R. Identified in a complex with RTN4R and LINGO1. Peripherally associated with AMPAR complex. AMPAR complex consists of an inner core made of 4 pore-forming GluA/GRIA proteins (GRIA1, GRIA2, GRIA3 and GRIA4) and 4 major auxiliary subunits arranged in a twofold symmetry. One of the two pairs of distinct binding sites is occupied either by CNIH2, CNIH3 or CACNG2, CACNG3. The other harbors CACNG2, CACNG3, CACNG4, CACNG8 or GSG1L. This inner core of AMPAR complex is complemented by outer core constituents binding directly to the GluA/GRIA proteins at sites distinct from the interaction sites of the inner core constituents. Outer core constituents include at least PRRT1, PRRT2, CKAMP44/SHISA9, FRRS1L and NRN1. The proteins of the inner and outer core serve as a platform for other, more peripherally associated AMPAR constituents, including OLFM1. Alone or in combination, these auxiliary subunits control the gating and pharmacology of the AMPAR complex and profoundly impact their biogenesis and protein processing. Interacts with OLFM2.

It localises to the secreted. It is found in the synapse. Its subcellular location is the endoplasmic reticulum. The protein resides in the cell projection. The protein localises to the axon. It localises to the perikaryon. Contributes to the regulation of axonal growth in the embryonic and adult central nervous system by inhibiting interactions between RTN4R and LINGO1. Inhibits RTN4R-mediated axon growth cone collapse. May play an important role in regulating the production of neural crest cells by the neural tube. May be required for normal responses to olfactory stimuli. The protein is Noelin (OLFM1) of Homo sapiens (Human).